A 364-amino-acid polypeptide reads, in one-letter code: Succinate--CoA ligase [ADP-forming] subunit beta (364 aa).

Positions 9 to 229 (KNIFKKYGIP…EFEEYKNKEK (221 aa)) constitute an ATP-grasp domain. ATP contacts are provided by residues K43, 50-52 (GRG), E89, L92, and E97. Residues N189 and D203 each contribute to the Mg(2+) site. Substrate-binding positions include N246 and 303-305 (GIT).

Belongs to the succinate/malate CoA ligase beta subunit family. Heterotetramer of two alpha and two beta subunits. Mg(2+) serves as cofactor.

The enzyme catalyses succinate + ATP + CoA = succinyl-CoA + ADP + phosphate. It catalyses the reaction GTP + succinate + CoA = succinyl-CoA + GDP + phosphate. Its pathway is carbohydrate metabolism; tricarboxylic acid cycle; succinate from succinyl-CoA (ligase route): step 1/1. In terms of biological role, succinyl-CoA synthetase functions in the citric acid cycle (TCA), coupling the hydrolysis of succinyl-CoA to the synthesis of either ATP or GTP and thus represents the only step of substrate-level phosphorylation in the TCA. The beta subunit provides nucleotide specificity of the enzyme and binds the substrate succinate, while the binding sites for coenzyme A and phosphate are found in the alpha subunit. The chain is Succinate--CoA ligase [ADP-forming] subunit beta from Methanocaldococcus jannaschii (strain ATCC 43067 / DSM 2661 / JAL-1 / JCM 10045 / NBRC 100440) (Methanococcus jannaschii).